A 463-amino-acid chain; its full sequence is Mitochondrial dynamics protein MID51 (463 aa).

The Mitochondrial intermembrane segment spans residues 1–23; that stretch reads MAGAGERKGKKDDNGIGTAIDFV. The chain crosses the membrane as a helical span at residues 24 to 46; sequence LSNARLVLGVGGAAMLGIATLAV. Residues 47–463 are Cytoplasmic-facing; it reads KRMYDRAISA…LSEPEVLLQT (417 aa). A dimerization region spans residues 49–195; the sequence is MYDRAISAPT…LSGSLYDDLQ (147 aa). 4 positions are modified to phosphoserine: Ser55, Ser59, Ser79, and Ser94. The interval 57-77 is disordered; sequence PTSPTRLSHSGKRSWEEPNWM. The important for interaction with DNM1L stretch occupies residues 160–169; sequence AAVDICAELR. Residues Ser187, Ser189, and His201 each contribute to the ADP site. The important for interaction with DNM1L stretch occupies residues 234–243; the sequence is RRENPEYFPR. The ADP site is built by Ser340, Arg342, and Lys368.

The protein belongs to the MID49/MID51 family. As to quaternary structure, homodimer. Interacts with DNM1L.

It is found in the mitochondrion outer membrane. Mitochondrial outer membrane protein which regulates mitochondrial fission/fusion dynamics. Promotes the recruitment and association of the fission mediator dynamin-related protein 1 (DNM1L) to the mitochondrial surface independently of the mitochondrial fission FIS1 and MFF proteins. Regulates DNM1L GTPase activity and DNM1L oligomerization. Binds ADP and can also bind GDP, although with lower affinity. Does not bind CDP, UDP, ATP, AMP or GTP. Inhibits DNM1L GTPase activity in the absence of bound ADP. Requires ADP to stimulate DNM1L GTPase activity and the assembly of DNM1L into long, oligomeric tubules with a spiral pattern, as opposed to the ring-like DNM1L oligomers observed in the absence of bound ADP. Does not require ADP for its function in recruiting DNM1L. This chain is Mitochondrial dynamics protein MID51 (Mief1), found in Mus musculus (Mouse).